The primary structure comprises 357 residues: Phenylalanine--tRNA ligase alpha subunit (357 aa).

Glu-259 contacts Mg(2+).

This sequence belongs to the class-II aminoacyl-tRNA synthetase family. Phe-tRNA synthetase alpha subunit type 1 subfamily. Tetramer of two alpha and two beta subunits. It depends on Mg(2+) as a cofactor.

The protein resides in the cytoplasm. It catalyses the reaction tRNA(Phe) + L-phenylalanine + ATP = L-phenylalanyl-tRNA(Phe) + AMP + diphosphate + H(+). The sequence is that of Phenylalanine--tRNA ligase alpha subunit from Jannaschia sp. (strain CCS1).